The chain runs to 460 residues: Glycine--tRNA ligase (460 aa).

2 residues coordinate substrate: arginine 98 and glutamate 172. Residues 204 to 206, 214 to 219, 288 to 289, and 332 to 335 contribute to the ATP site; these read RNE, FRTREF, EL, and GADR. Residue 219–223 coordinates substrate; it reads FEQME. Substrate is bound at residue 328–332; it reads EPSLG.

This sequence belongs to the class-II aminoacyl-tRNA synthetase family. As to quaternary structure, homodimer.

It localises to the cytoplasm. It carries out the reaction tRNA(Gly) + glycine + ATP = glycyl-tRNA(Gly) + AMP + diphosphate. Its function is as follows. Catalyzes the attachment of glycine to tRNA(Gly). The sequence is that of Glycine--tRNA ligase from Geobacillus kaustophilus (strain HTA426).